The sequence spans 417 residues: Squamosa promoter-binding-like protein 14 (417 aa).

Composition is skewed to gly residues over residues 1–26 (MEMA…GGGG) and 51–60 (AGGGGTGSGS). 2 disordered regions span residues 1–32 (MEMA…EHRQ) and 51–102 (AGGG…PPPP). Residues 61–74 (GSASAAPPSSSSKA) are compositionally biased toward low complexity. The segment covering 75 to 84 (AGGGRGGGGK) has biased composition (gly residues). Residues 101-178 (PPRCQVEGCG…AGHNERRRRP (78 aa)) form an SBP-type zinc finger. Residues Cys-104, Cys-109, Cys-126, His-129, Cys-145, Cys-148, and His-152 each coordinate Zn(2+). The Bipartite nuclear localization signal signature appears at 161–177 (KRSCRRRLAGHNERRRR). Position 163 is a phosphoserine (Ser-163). Cys-164 serves as a coordination point for Zn(2+). The segment at 387-417 (LQGNGPAPAPRIDPGSGSTFDQTSNTMDWSL) is disordered. Over residues 402–417 (SGSTFDQTSNTMDWSL) the composition is skewed to polar residues.

Interacts with PCF1 and PCF2. Interacts with IPI1. Interacts with D53. Interacts with SLR1. Interacts (via C-terminus) with SHI1. In terms of processing, phosphorylated at Ser-163 in response to infection by the fungal pathogen Magnaporthe oryzae. Post-translationally, ubiquitinated by IPI1, which leads to proteasomal degradation. Expressed in young panicles. Expressed in the shoot apex at both the vegetative and reproductive stages. Highly expressed in the promordia of primary and secondary branches. Highly expressed in young panicles.

The protein localises to the nucleus. Transcriptional activator that binds to the SBP-box DNA core binding motif 5'-GTAC-3'. Can target the TCP motif 5'-TGGGCC/T-3' through interaction with PCF1 and PCF2. Key regulator of the plant architecture that controls shoot branching and panicle development. Promotes panicle branching. Promotes high grain yield. Binds to the promoters of TB1 and DEP1. Suppresses rice tillering mainly through positive regulation of TB1. Regulates plant height and panicle length through positive regulation of DEP1. Repressed by D53 in strigolactone (SL) signaling. Acts with D53 to mediate the SL-regulated tiller development. Functions as a direct downstream component of D53 in regulating tiller number and SL-induced gene expression. Binds directly to the D53 promoter and plays a critical role in the negative feedback regulation of SL-induced D53 expression. Involved in defense response against pathogens. Phosphorylated at Ser-163 in response to infection by the fungal pathogen Magnaporthe oryzae. Phosphorylation reduces SPL14/IPA1 binding to the GTAC site in the DEP1 promoter and enhances binding to the TGGGCC site in the WRKY45 promoter. Binding to the promoter of the pathogen defense gene WRKY45 activates its expression, leading to enhanced disease resistance. Reduces gibberellin-mediated disease susceptibility by stabilizing SLR1. Possesses transactivation activity in yeast cells. This Oryza sativa subsp. japonica (Rice) protein is Squamosa promoter-binding-like protein 14.